The following is a 100-amino-acid chain: MVTLNHYLILSSLLFMIGLVGVMRRKNLLMLFFSTEIMLNAVNVGLVAAGKYMNDMAGQMFSFFIIAVAASEVAVGLGLLILWYKKNGSLDLDNLQLMKG.

3 consecutive transmembrane segments (helical) span residues 2-22 (VTLNHYLILSSLLFMIGLVGV), 28-48 (LLMLFFSTEIMLNAVNVGLVA), and 63-83 (FFIIAVAASEVAVGLGLLILW).

It belongs to the complex I subunit 4L family. In terms of assembly, NDH-1 is composed of 14 different subunits. Subunits NuoA, H, J, K, L, M, N constitute the membrane sector of the complex.

The protein localises to the cell inner membrane. It catalyses the reaction a quinone + NADH + 5 H(+)(in) = a quinol + NAD(+) + 4 H(+)(out). Functionally, NDH-1 shuttles electrons from NADH, via FMN and iron-sulfur (Fe-S) centers, to quinones in the respiratory chain. The immediate electron acceptor for the enzyme in this species is believed to be ubiquinone. Couples the redox reaction to proton translocation (for every two electrons transferred, four hydrogen ions are translocated across the cytoplasmic membrane), and thus conserves the redox energy in a proton gradient. This is NADH-quinone oxidoreductase subunit K from Wolinella succinogenes (strain ATCC 29543 / DSM 1740 / CCUG 13145 / JCM 31913 / LMG 7466 / NCTC 11488 / FDC 602W) (Vibrio succinogenes).